The sequence spans 208 residues: Imidazoleglycerol-phosphate dehydratase (208 aa).

Belongs to the imidazoleglycerol-phosphate dehydratase family.

It catalyses the reaction D-erythro-1-(imidazol-4-yl)glycerol 3-phosphate = 3-(imidazol-4-yl)-2-oxopropyl phosphate + H2O. It participates in amino-acid biosynthesis; L-histidine biosynthesis; L-histidine from 5-phospho-alpha-D-ribose 1-diphosphate: step 6/9. This chain is Imidazoleglycerol-phosphate dehydratase (his3), found in Trichoderma harzianum (Hypocrea lixii).